The chain runs to 593 residues: Aspartate--tRNA ligase (593 aa).

E181 lines the L-aspartate pocket. Residues 205 to 208 are aspartate; it reads QLYK. R227 contacts L-aspartate. ATP contacts are provided by residues 227-229 and Q236; that span reads RDE. H455 is a binding site for L-aspartate. Residue E489 participates in ATP binding. R496 is an L-aspartate binding site. 541–544 serves as a coordination point for ATP; it reads GLDR.

It belongs to the class-II aminoacyl-tRNA synthetase family. Type 1 subfamily. Homodimer.

It is found in the cytoplasm. The catalysed reaction is tRNA(Asp) + L-aspartate + ATP = L-aspartyl-tRNA(Asp) + AMP + diphosphate. Its function is as follows. Catalyzes the attachment of L-aspartate to tRNA(Asp) in a two-step reaction: L-aspartate is first activated by ATP to form Asp-AMP and then transferred to the acceptor end of tRNA(Asp). This Ruminiclostridium cellulolyticum (strain ATCC 35319 / DSM 5812 / JCM 6584 / H10) (Clostridium cellulolyticum) protein is Aspartate--tRNA ligase.